The sequence spans 282 residues: Putative quercetin 2,3-dioxygenase VC_A0969 (282 aa).

A disordered region spans residues 1–21; the sequence is MTKDREIRQTVPAQPTSDGDG. 4 residues coordinate a divalent metal cation: His59, His61, His103, and Glu105.

This sequence belongs to the pirin family. A divalent metal cation is required as a cofactor.

The catalysed reaction is quercetin + O2 = 2-(3,4-dihydroxybenzoyloxy)-4,6-dihydroxybenzoate + CO. The protein operates within flavonoid metabolism; quercetin degradation. Functionally, putative quercetin 2,3-dioxygenase. In Vibrio cholerae serotype O1 (strain ATCC 39315 / El Tor Inaba N16961), this protein is Putative quercetin 2,3-dioxygenase VC_A0969.